A 164-amino-acid chain; its full sequence is uncharacterized protein (164 aa).

Residues 144-164 (GFISPEKEHESEDMTSQSLVA) form a disordered region.

This is an uncharacterized protein from Synechocystis sp. (strain ATCC 27184 / PCC 6803 / Kazusa).